The primary structure comprises 500 residues: Probable cytosol aminopeptidase (500 aa).

Mn(2+) contacts are provided by Lys265 and Asp270. Lys277 is a catalytic residue. Mn(2+)-binding residues include Asp288, Asp347, and Glu349. The active site involves Arg351.

The protein belongs to the peptidase M17 family. The cofactor is Mn(2+).

It localises to the cytoplasm. It carries out the reaction Release of an N-terminal amino acid, Xaa-|-Yaa-, in which Xaa is preferably Leu, but may be other amino acids including Pro although not Arg or Lys, and Yaa may be Pro. Amino acid amides and methyl esters are also readily hydrolyzed, but rates on arylamides are exceedingly low.. It catalyses the reaction Release of an N-terminal amino acid, preferentially leucine, but not glutamic or aspartic acids.. Its function is as follows. Presumably involved in the processing and regular turnover of intracellular proteins. Catalyzes the removal of unsubstituted N-terminal amino acids from various peptides. The chain is Probable cytosol aminopeptidase from Rickettsia peacockii (strain Rustic).